Here is a 952-residue protein sequence, read N- to C-terminus: Leucine--tRNA ligase (952 aa).

Positions 66-77 match the 'HIGH' region motif; sequence PYPSGAGLHVGH. The 'KMSKS' region signature appears at 722 to 726; the sequence is KMGKS. Lys-725 serves as a coordination point for ATP.

Belongs to the class-I aminoacyl-tRNA synthetase family.

It is found in the cytoplasm. It catalyses the reaction tRNA(Leu) + L-leucine + ATP = L-leucyl-tRNA(Leu) + AMP + diphosphate. This is Leucine--tRNA ligase from Corynebacterium glutamicum (strain ATCC 13032 / DSM 20300 / JCM 1318 / BCRC 11384 / CCUG 27702 / LMG 3730 / NBRC 12168 / NCIMB 10025 / NRRL B-2784 / 534).